The chain runs to 107 residues: L-rhamnose mutarotase (107 aa).

Substrate is bound at residue Tyr18. The active-site Proton donor is His22. Residues Tyr41 and 76-77 (WW) each bind substrate.

It belongs to the rhamnose mutarotase family. Homodimer.

It is found in the cytoplasm. The enzyme catalyses alpha-L-rhamnose = beta-L-rhamnose. Its pathway is carbohydrate metabolism; L-rhamnose metabolism. Involved in the anomeric conversion of L-rhamnose. The chain is L-rhamnose mutarotase from Paraburkholderia xenovorans (strain LB400).